Here is a 712-residue protein sequence, read N- to C-terminus: Polyribonucleotide nucleotidyltransferase (712 aa).

Mg(2+)-binding residues include D487 and D493. Residues 554 to 613 (PKIITMTINPDKIRDVIGPSGKQINKIIEETGVKIDIEQDGTVFISSINQEMNDKAKKII) enclose the KH domain. Residues 623–691 (GEIYEGKVKR…KQGRVNLSRK (69 aa)) enclose the S1 motif domain.

It belongs to the polyribonucleotide nucleotidyltransferase family. Mg(2+) is required as a cofactor.

It localises to the cytoplasm. The catalysed reaction is RNA(n+1) + phosphate = RNA(n) + a ribonucleoside 5'-diphosphate. Involved in mRNA degradation. Catalyzes the phosphorolysis of single-stranded polyribonucleotides processively in the 3'- to 5'-direction. This is Polyribonucleotide nucleotidyltransferase from Bacillus anthracis (strain CDC 684 / NRRL 3495).